We begin with the raw amino-acid sequence, 332 residues long: MKKFAETPFLPTEVEIEAISDNEAKISAYPFEDGFAITLAHPLRRLLLSSSVGCAPIAVKIEGASHEFDSLRGMLEDVAIFVINLKNIKFKINGDKEQVVVEYSFNGPRDIKGEDLINSEVDVVSKDAHLATINSDCNLTFSVILQKGIGYMPSEDIRDIVGADYIPIDAFFTPVKKVVYDIEKMLVEDNPNYEKAVFRVQTNGQISPVTAFKEAVSVMYSQMSVFNKVFDLSEVAVSDSGEEPVELKELVIRIDDLNLSARSFNSLDRAGLKYLGELVLMSEVEVKNIKNLGKKSYDEIAEKLESLGYPVENTLPENVASALRRKLEQLKA.

Positions 1–227 are alpha N-terminal domain (alpha-NTD); the sequence is MKKFAETPFL…VMYSQMSVFN (227 aa). The interval 248–332 is alpha C-terminal domain (alpha-CTD); the sequence is KELVIRIDDL…LRRKLEQLKA (85 aa).

The protein belongs to the RNA polymerase alpha chain family. Homodimer. The RNAP catalytic core consists of 2 alpha, 1 beta, 1 beta' and 1 omega subunit. When a sigma factor is associated with the core the holoenzyme is formed, which can initiate transcription.

The enzyme catalyses RNA(n) + a ribonucleoside 5'-triphosphate = RNA(n+1) + diphosphate. In terms of biological role, DNA-dependent RNA polymerase catalyzes the transcription of DNA into RNA using the four ribonucleoside triphosphates as substrates. In Aliarcobacter butzleri (strain RM4018) (Arcobacter butzleri), this protein is DNA-directed RNA polymerase subunit alpha.